We begin with the raw amino-acid sequence, 205 residues long: Urease accessory protein UreG 1 (205 aa).

14 to 21 contributes to the GTP binding site; sequence GPVGSGKT.

This sequence belongs to the SIMIBI class G3E GTPase family. UreG subfamily. As to quaternary structure, homodimer. UreD, UreF and UreG form a complex that acts as a GTP-hydrolysis-dependent molecular chaperone, activating the urease apoprotein by helping to assemble the nickel containing metallocenter of UreC. The UreE protein probably delivers the nickel.

The protein localises to the cytoplasm. Its function is as follows. Facilitates the functional incorporation of the urease nickel metallocenter. This process requires GTP hydrolysis, probably effectuated by UreG. The protein is Urease accessory protein UreG 1 of Methylobacterium radiotolerans (strain ATCC 27329 / DSM 1819 / JCM 2831 / NBRC 15690 / NCIMB 10815 / 0-1).